Consider the following 133-residue polypeptide: MKPQFVGILLSSLLGAALGNRMRCYNCGGSPSSSCKEAVTTCGEGRPQPGLEQIKLPGNPPVTLIHQHPACVAAHHCNQVETESVGDVTYPAHRDCYLGDLCNSAVASHVAPAGILAAAATALTCLLPGLWSG.

Positions 1-19 (MKPQFVGILLSSLLGAALG) are cleaved as a signal peptide. The UPAR/Ly6 domain occupies 22 to 116 (MRCYNCGGSP…ASHVAPAGIL (95 aa)). A disulfide bond links Cys27 and Cys35. Thr40 and Thr41 each carry an O-linked (GalNAc...) threonine glycan. Cystine bridges form between Cys42-Cys71 and Cys77-Cys96. Residue Ser104 is the site of GPI-anchor amidated serine attachment. Positions 105-133 (AVASHVAPAGILAAAATALTCLLPGLWSG) are cleaved as a propeptide — removed in mature form.

Homodimer. O-glycosylated. Expressed in the adult lung, and in fetal liver, lung, kidney, brain and spleen.

It localises to the cell membrane. The protein localises to the cell projection. It is found in the filopodium. In Homo sapiens (Human), this protein is Lymphocyte antigen 6 complex locus protein G6d (LY6G6D).